Here is a 485-residue protein sequence, read N- to C-terminus: Aspartyl/glutamyl-tRNA(Asn/Gln) amidotransferase subunit B (485 aa).

This sequence belongs to the GatB/GatE family. GatB subfamily. Heterotrimer of A, B and C subunits.

It carries out the reaction L-glutamyl-tRNA(Gln) + L-glutamine + ATP + H2O = L-glutaminyl-tRNA(Gln) + L-glutamate + ADP + phosphate + H(+). The catalysed reaction is L-aspartyl-tRNA(Asn) + L-glutamine + ATP + H2O = L-asparaginyl-tRNA(Asn) + L-glutamate + ADP + phosphate + 2 H(+). Its function is as follows. Allows the formation of correctly charged Asn-tRNA(Asn) or Gln-tRNA(Gln) through the transamidation of misacylated Asp-tRNA(Asn) or Glu-tRNA(Gln) in organisms which lack either or both of asparaginyl-tRNA or glutaminyl-tRNA synthetases. The reaction takes place in the presence of glutamine and ATP through an activated phospho-Asp-tRNA(Asn) or phospho-Glu-tRNA(Gln). The protein is Aspartyl/glutamyl-tRNA(Asn/Gln) amidotransferase subunit B of Bordetella petrii (strain ATCC BAA-461 / DSM 12804 / CCUG 43448).